A 396-amino-acid polypeptide reads, in one-letter code: Tryptophan synthase beta chain (396 aa).

Residue Lys-88 is modified to N6-(pyridoxal phosphate)lysine.

It belongs to the TrpB family. As to quaternary structure, tetramer of two alpha and two beta chains. The cofactor is pyridoxal 5'-phosphate.

The catalysed reaction is (1S,2R)-1-C-(indol-3-yl)glycerol 3-phosphate + L-serine = D-glyceraldehyde 3-phosphate + L-tryptophan + H2O. It participates in amino-acid biosynthesis; L-tryptophan biosynthesis; L-tryptophan from chorismate: step 5/5. Its function is as follows. The beta subunit is responsible for the synthesis of L-tryptophan from indole and L-serine. The protein is Tryptophan synthase beta chain of Actinobacillus pleuropneumoniae serotype 3 (strain JL03).